The primary structure comprises 331 residues: Glycerophosphodiester phosphodiesterase 1 (331 aa).

Residues 1–2 (MW) are Cytoplasmic-facing. A helical transmembrane segment spans residues 3–23 (LWEEQGGLMGPFSFLLLVLLL). Residues 24–254 (LTRSPFNACL…WKQSMFVALD (231 aa)) lie on the Lumenal side of the membrane. The 267-residue stretch at 65 to 331 (VSAIAHRGGS…SMLEDCTPEF (267 aa)) folds into the GP-PDE domain. The Mg(2+) site is built by E97 and D99. N168 is a glycosylation site (N-linked (GlcNAc...) asparagine). D174 contacts Mg(2+). A glycan (N-linked (GlcNAc...) asparagine) is linked at N198. The chain crosses the membrane as a helical span at residues 255 to 275 (ILLDWSMHNILWYLCGVSAFL). At 276-331 (AQKDFISPDYVKKWSAKGIQVVAWTVNTFDEKSYYESHLGSSYITDSMLEDCTPEF) the chain is on the cytoplasmic side.

This sequence belongs to the glycerophosphoryl diester phosphodiesterase family. Interacts with PRAF2. Interacts with RGS16. It depends on Mg(2+) as a cofactor. In terms of processing, N-glycosylated.

The protein localises to the cell membrane. It is found in the cytoplasmic vesicle membrane. The enzyme catalyses sn-glycero-3-phospho-1D-myo-inositol + H2O = myo-inositol + sn-glycerol 3-phosphate + H(+). It catalyses the reaction 1-O-(1Z-octadecenyl)-sn-glycero-3-phospho-(N-5Z,8Z,11Z,14Z-eicosatetraenoyl)-ethanolamine + H2O = 1-O-(1Z-octadecenyl)-sn-glycero-3-phosphate + N-(5Z,8Z,11Z,14Z-eicosatetraenoyl)-ethanolamine + H(+). It carries out the reaction 1-O-(1Z-octadecenyl)-sn-glycero-3-phospho-(N-9Z-octadecenoyl)-ethanolamine + H2O = 1-O-(1Z-octadecenyl)-sn-glycero-3-phosphate + N-(9Z-octadecenoyl) ethanolamine + H(+). The catalysed reaction is 1-O-(1Z-octadecenyl)-sn-glycero-3-phospho-N-hexadecanoyl-ethanolamine + H2O = 1-O-(1Z-octadecenyl)-sn-glycero-3-phosphate + N-hexadecanoylethanolamine + H(+). The enzyme catalyses N-(4Z,7Z,10Z,13Z,16Z,19Z)-docosahexaenoyl-sn-glycero-3-phosphoethanolamine + H2O = N-(4Z,7Z,10Z,13Z,16Z,19Z)-docosahexaenoyl ethanolamine + sn-glycerol 3-phosphate + H(+). It catalyses the reaction N-eicosanoyl-sn-glycero-3-phosphoethanolamine + H2O = N-eicosanoyl ethanolamine + sn-glycerol 3-phosphate + H(+). It carries out the reaction N-hexadecanoyl-sn-glycero-3-phosphoethanolamine + H2O = N-hexadecanoylethanolamine + sn-glycerol 3-phosphate + H(+). The catalysed reaction is N-(9Z-octadecenoyl)-sn-glycero-3-phosphoethanolamine + H2O = N-(9Z-octadecenoyl) ethanolamine + sn-glycerol 3-phosphate + H(+). The enzyme catalyses N-(5Z,8Z,11Z,14Z-eicosatetraenoyl)-sn-glycero-3-phosphoethanolamine + H2O = N-(5Z,8Z,11Z,14Z-eicosatetraenoyl)-ethanolamine + sn-glycerol 3-phosphate + H(+). Its activity is regulated as follows. Inhibited by EDTA, calcium chloride, and zinc chloride. Enhanced by magnesium chloride. Glycerophosphodiester phosphodiesterase activity can be modulated by G-protein signaling pathways. In terms of biological role, hydrolyzes the phosphodiester bond of glycerophosphodiesters such as glycerophosphoinositol (GroPIns) and glycerophosphoethanolamine (GroPEth), to yield a glycerol phosphate and an alcohol. Hydrolyzes glycerophospho-N-acylethanolamines to N-acylethanolamines in the brain and participates in bioactive N-acylethanolamine biosynthesis such as anandamide (an endocannabinoid), N-palmitoylethanolamine (an anti-inflammatory), and N-oleoylethanolamine (an anorexic). In addition, has a lysophospholipase D activity by hydrolyzing N-acyl-lysoplasmenylethanolamine (N-acyl-lysoPlsEt) to N-acylethanolamine. However lysophospholipase D activity is lower than glycerophosphodiester phosphodiesterase activity. Has little or no activity towards glycerophosphocholine. This is Glycerophosphodiester phosphodiesterase 1 from Bos taurus (Bovine).